A 169-amino-acid polypeptide reads, in one-letter code: Disulfide bond formation protein B (169 aa).

Topologically, residues 1 to 8 (MRLSVRWV) are cytoplasmic. The chain crosses the membrane as a helical span at residues 9–25 (FFLGFFLCALMLAIAGY). Residues 26–43 (FQFVENLEPCPLCILSRV) are Periplasmic-facing. C35 and C38 form a disulfide bridge. The chain crosses the membrane as a helical span at residues 44–60 (AVLAIGGVFLVAALHNP). Over 61–67 (KSWGIKV) the chain is Cytoplasmic. A helical membrane pass occupies residues 68 to 84 (YALLGFVVTLIGIGITG). The Periplasmic segment spans residues 85–141 (RHVWLQSLPADQVPACGPGLNFMLDNFPLTETLELVFRGSGECAEVQWSFLGLTIPG). C100 and C127 are joined by a disulfide. A helical membrane pass occupies residues 142–160 (WTLVAFLFLGVISLWQMGR). Topologically, residues 161-169 (TGGGAGKLT) are cytoplasmic.

It belongs to the DsbB family.

Its subcellular location is the cell inner membrane. Functionally, required for disulfide bond formation in some periplasmic proteins. Acts by oxidizing the DsbA protein. This Nitrosococcus oceani (strain ATCC 19707 / BCRC 17464 / JCM 30415 / NCIMB 11848 / C-107) protein is Disulfide bond formation protein B.